A 361-amino-acid polypeptide reads, in one-letter code: DNA replication and repair protein RecF (361 aa).

30-37 contacts ATP; the sequence is GANGSGKT.

The protein belongs to the RecF family.

Its subcellular location is the cytoplasm. Functionally, the RecF protein is involved in DNA metabolism; it is required for DNA replication and normal SOS inducibility. RecF binds preferentially to single-stranded, linear DNA. It also seems to bind ATP. This chain is DNA replication and repair protein RecF, found in Chromohalobacter salexigens (strain ATCC BAA-138 / DSM 3043 / CIP 106854 / NCIMB 13768 / 1H11).